The primary structure comprises 376 residues: Chaperone protein DnaJ (376 aa).

The region spanning 5–70 (DYYEILGVSK…QKRAAYDQYG (66 aa)) is the J domain. Residues 131–209 (GVTKEIRIPT…CHGHGRVERS (79 aa)) form a CR-type zinc finger. Zn(2+)-binding residues include Cys-144, Cys-147, Cys-161, Cys-164, Cys-183, Cys-186, Cys-197, and Cys-200. 4 CXXCXGXG motif repeats span residues 144–151 (CDVCHGSG), 161–168 (CPTCHGSG), 183–190 (CPHCQGRG), and 197–204 (CNKCHGHG).

It belongs to the DnaJ family. In terms of assembly, homodimer. Zn(2+) is required as a cofactor.

Its subcellular location is the cytoplasm. Participates actively in the response to hyperosmotic and heat shock by preventing the aggregation of stress-denatured proteins and by disaggregating proteins, also in an autonomous, DnaK-independent fashion. Unfolded proteins bind initially to DnaJ; upon interaction with the DnaJ-bound protein, DnaK hydrolyzes its bound ATP, resulting in the formation of a stable complex. GrpE releases ADP from DnaK; ATP binding to DnaK triggers the release of the substrate protein, thus completing the reaction cycle. Several rounds of ATP-dependent interactions between DnaJ, DnaK and GrpE are required for fully efficient folding. Also involved, together with DnaK and GrpE, in the DNA replication of plasmids through activation of initiation proteins. This chain is Chaperone protein DnaJ, found in Escherichia coli (strain K12 / MC4100 / BW2952).